Reading from the N-terminus, the 246-residue chain is 1-(5-phosphoribosyl)-5-[(5-phosphoribosylamino)methylideneamino] imidazole-4-carboxamide isomerase (246 aa).

The active-site Proton acceptor is Asp8. Asp131 (proton donor) is an active-site residue.

It belongs to the HisA/HisF family.

The protein localises to the cytoplasm. It carries out the reaction 1-(5-phospho-beta-D-ribosyl)-5-[(5-phospho-beta-D-ribosylamino)methylideneamino]imidazole-4-carboxamide = 5-[(5-phospho-1-deoxy-D-ribulos-1-ylimino)methylamino]-1-(5-phospho-beta-D-ribosyl)imidazole-4-carboxamide. It functions in the pathway amino-acid biosynthesis; L-histidine biosynthesis; L-histidine from 5-phospho-alpha-D-ribose 1-diphosphate: step 4/9. This Polaromonas sp. (strain JS666 / ATCC BAA-500) protein is 1-(5-phosphoribosyl)-5-[(5-phosphoribosylamino)methylideneamino] imidazole-4-carboxamide isomerase.